An 88-amino-acid polypeptide reads, in one-letter code: Small ribosomal subunit protein uS15c (88 aa).

It belongs to the universal ribosomal protein uS15 family. As to quaternary structure, part of the 30S ribosomal subunit.

It localises to the plastid. It is found in the chloroplast. This is Small ribosomal subunit protein uS15c (rps15) from Arabis hirsuta (Hairy rock-cress).